The following is a 203-amino-acid chain: Thymidine kinase (203 aa).

ATP contacts are provided by residues 21–28 and 99–102; these read GCMFAGKT and DEIQ. The active-site Proton acceptor is the E100. Residues C156, C159, C194, and C197 each coordinate Zn(2+).

This sequence belongs to the thymidine kinase family. Homotetramer.

The protein localises to the cytoplasm. It catalyses the reaction thymidine + ATP = dTMP + ADP + H(+). In Mesoplasma florum (strain ATCC 33453 / NBRC 100688 / NCTC 11704 / L1) (Acholeplasma florum), this protein is Thymidine kinase.